The following is a 383-amino-acid chain: Glycoprotein gp2 (383 aa).

The signal sequence occupies residues M1–T25. A compositionally biased stretch (low complexity) spans T24–T75. Residues T24 to Q136 form a disordered region. N48 carries an N-linked (GlcNAc...) asparagine; by host glycan. Basic residues predominate over residues H81–G91. N-linked (GlcNAc...) asparagine; by host glycosylation occurs at N128. Residues L354–L371 traverse the membrane as a helical segment.

The protein localises to the virion membrane. Its function is as follows. The glycoprotein gp2 from the avirulent strain Kentucky A (KyA) is probably non functional since this strain harbors an in-frame deletion of 1,242 nucleotides in gene 71. This chain is Glycoprotein gp2 (US4), found in Equus caballus (Horse).